We begin with the raw amino-acid sequence, 366 residues long: Dual-specificity RNA methyltransferase RlmN (366 aa).

Glutamate 91 serves as the catalytic Proton acceptor. The 237-residue stretch at glutamate 97–aspartate 333 folds into the Radical SAM core domain. A disulfide bridge connects residues cysteine 104 and cysteine 338. [4Fe-4S] cluster contacts are provided by cysteine 111, cysteine 115, and cysteine 118. Residues glycine 164–glutamate 165, serine 196, serine 218–histidine 220, and asparagine 295 each bind S-adenosyl-L-methionine. The S-methylcysteine intermediate role is filled by cysteine 338.

This sequence belongs to the radical SAM superfamily. RlmN family. The cofactor is [4Fe-4S] cluster.

The protein localises to the cytoplasm. It carries out the reaction adenosine(2503) in 23S rRNA + 2 reduced [2Fe-2S]-[ferredoxin] + 2 S-adenosyl-L-methionine = 2-methyladenosine(2503) in 23S rRNA + 5'-deoxyadenosine + L-methionine + 2 oxidized [2Fe-2S]-[ferredoxin] + S-adenosyl-L-homocysteine. The catalysed reaction is adenosine(37) in tRNA + 2 reduced [2Fe-2S]-[ferredoxin] + 2 S-adenosyl-L-methionine = 2-methyladenosine(37) in tRNA + 5'-deoxyadenosine + L-methionine + 2 oxidized [2Fe-2S]-[ferredoxin] + S-adenosyl-L-homocysteine. Its function is as follows. Specifically methylates position 2 of adenine 2503 in 23S rRNA and position 2 of adenine 37 in tRNAs. m2A2503 modification seems to play a crucial role in the proofreading step occurring at the peptidyl transferase center and thus would serve to optimize ribosomal fidelity. The protein is Dual-specificity RNA methyltransferase RlmN of Laribacter hongkongensis (strain HLHK9).